The following is a 157-amino-acid chain: D-aminoacyl-tRNA deacylase (157 aa).

The Gly-cisPro motif, important for rejection of L-amino acids signature appears at 137–138 (GP).

The protein belongs to the DTD family. As to quaternary structure, homodimer.

It is found in the cytoplasm. It catalyses the reaction glycyl-tRNA(Ala) + H2O = tRNA(Ala) + glycine + H(+). The catalysed reaction is a D-aminoacyl-tRNA + H2O = a tRNA + a D-alpha-amino acid + H(+). An aminoacyl-tRNA editing enzyme that deacylates mischarged D-aminoacyl-tRNAs. Also deacylates mischarged glycyl-tRNA(Ala), protecting cells against glycine mischarging by AlaRS. Acts via tRNA-based rather than protein-based catalysis; rejects L-amino acids rather than detecting D-amino acids in the active site. By recycling D-aminoacyl-tRNA to D-amino acids and free tRNA molecules, this enzyme counteracts the toxicity associated with the formation of D-aminoacyl-tRNA entities in vivo and helps enforce protein L-homochirality. This Cyanothece sp. (strain PCC 7425 / ATCC 29141) protein is D-aminoacyl-tRNA deacylase.